A 401-amino-acid chain; its full sequence is Voltage-gated potassium channel subunit beta-1 (401 aa).

Positions 90, 91, 97, and 119 each coordinate NADP(+). The active-site Proton donor/acceptor is Tyr-124. NADP(+)-binding residues include Asn-192, Ser-222, Arg-223, Gln-248, Trp-277, Ser-278, Pro-279, Leu-280, Ala-281, Cys-282, Lys-288, Arg-298, Gly-357, Ser-359, Gln-363, Glu-366, and Asn-367.

The protein belongs to the shaker potassium channel beta subunit family. In terms of assembly, homotetramer. Interaction with tetrameric potassium channel alpha subunits gives rise to a heterooctamer.

It is found in the cytoplasm. The protein localises to the membrane. It localises to the cell membrane. The enzyme catalyses a primary alcohol + NADP(+) = an aldehyde + NADPH + H(+). The catalysed reaction is a secondary alcohol + NADP(+) = a ketone + NADPH + H(+). Its function is as follows. Regulatory subunit of the voltage-gated potassium (Kv) channels composed of pore-forming and potassium-conducting alpha subunits and of regulatory beta subunits. The beta-1/KCNAB1 cytoplasmic subunit mediates closure of delayed rectifier potassium channels by physically obstructing the pore via its N-terminal domain and increases the speed of channel closure for other family members. Promotes the inactivation of KCNA1, KCNA2, KCNA4, KCNA5 and KCNA6 alpha subunit-containing channels. Displays nicotinamide adenine dinucleotide phosphate (NADPH)-dependent aldoketoreductase activity by catalyzing the NADPH-dependent reduction of a variety of endogenous aldehydes and ketones. The binding of NADPH is required for efficient down-regulation of potassium channel activity. Oxidation of the bound NADPH restrains N-terminal domain from blocking the channel, thereby decreasing N-type inactivation of potassium channel activity. The chain is Voltage-gated potassium channel subunit beta-1 (KCNAB1) from Gallus gallus (Chicken).